The sequence spans 724 residues: Ribosomal RNA large subunit methyltransferase K/L (724 aa).

The region spanning 42 to 153 (DAQRLVLWSR…KGRATLSVDL (112 aa)) is the THUMP domain.

It belongs to the methyltransferase superfamily. RlmKL family.

Its subcellular location is the cytoplasm. The enzyme catalyses guanosine(2445) in 23S rRNA + S-adenosyl-L-methionine = N(2)-methylguanosine(2445) in 23S rRNA + S-adenosyl-L-homocysteine + H(+). It catalyses the reaction guanosine(2069) in 23S rRNA + S-adenosyl-L-methionine = N(2)-methylguanosine(2069) in 23S rRNA + S-adenosyl-L-homocysteine + H(+). Its function is as follows. Specifically methylates the guanine in position 2445 (m2G2445) and the guanine in position 2069 (m7G2069) of 23S rRNA. The chain is Ribosomal RNA large subunit methyltransferase K/L from Xylella fastidiosa (strain M23).